Here is a 78-residue protein sequence, read N- to C-terminus: Conotoxin CaFr179 (78 aa).

Positions 1–19 (MSGLGIMVLTLLLLVFMEA) are cleaved as a signal peptide. Residues 20–44 (SHQDAGEKQATQRDAINVRRRRSLA) constitute a propeptide that is removed on maturation. Cystine bridges form between Cys-52–Cys-64, Cys-56–Cys-72, and Cys-63–Cys-76. At Phe-77 the chain carries Phenylalanine amide.

This sequence belongs to the conotoxin O3 superfamily. Expressed by the venom duct.

The protein resides in the secreted. The chain is Conotoxin CaFr179 from Conus caracteristicus (Characteristic cone).